The following is a 267-amino-acid chain: Type III pantothenate kinase (267 aa).

6 to 13 (DSGNSRLK) provides a ligand contact to ATP. Substrate contacts are provided by residues tyrosine 96 and 103–106 (GADR). The active-site Proton acceptor is aspartate 105. Threonine 131 serves as a coordination point for ATP. Threonine 181 serves as a coordination point for substrate.

The protein belongs to the type III pantothenate kinase family. Homodimer. NH4(+) is required as a cofactor. K(+) serves as cofactor.

The protein resides in the cytoplasm. It carries out the reaction (R)-pantothenate + ATP = (R)-4'-phosphopantothenate + ADP + H(+). It functions in the pathway cofactor biosynthesis; coenzyme A biosynthesis; CoA from (R)-pantothenate: step 1/5. Catalyzes the phosphorylation of pantothenate (Pan), the first step in CoA biosynthesis. The polypeptide is Type III pantothenate kinase (Bordetella bronchiseptica (strain ATCC BAA-588 / NCTC 13252 / RB50) (Alcaligenes bronchisepticus)).